A 152-amino-acid polypeptide reads, in one-letter code: Peptide deformylase (152 aa).

Cys88 and His130 together coordinate Fe cation. Glu131 is an active-site residue. Fe cation is bound at residue His134.

The protein belongs to the polypeptide deformylase family. Requires Fe(2+) as cofactor.

The catalysed reaction is N-terminal N-formyl-L-methionyl-[peptide] + H2O = N-terminal L-methionyl-[peptide] + formate. Removes the formyl group from the N-terminal Met of newly synthesized proteins. Requires at least a dipeptide for an efficient rate of reaction. N-terminal L-methionine is a prerequisite for activity but the enzyme has broad specificity at other positions. In Syntrophomonas wolfei subsp. wolfei (strain DSM 2245B / Goettingen), this protein is Peptide deformylase.